Consider the following 300-residue polypeptide: Cation-efflux pump FieF (300 aa).

The next 4 membrane-spanning stretches (helical) occupy residues 12–32, 40–60, 82–102, and 114–134; these read AALS…FAWW, LAAL…LFVV, AALA…LTGF, and PSIG…LVTF. Zn(2+)-binding residues include aspartate 45 and aspartate 49. Zn(2+)-binding residues include histidine 153 and aspartate 157. A run of 2 helical transmembrane segments spans residues 155–175 and 178–198; these read QSDV…WYGF and ADAL…LRMG.

Belongs to the cation diffusion facilitator (CDF) transporter (TC 2.A.4) family. FieF subfamily. In terms of assembly, homodimer.

The protein resides in the cell inner membrane. The enzyme catalyses Zn(2+)(in) + H(+)(out) = Zn(2+)(out) + H(+)(in). The catalysed reaction is Cd(2+)(in) + H(+)(out) = Cd(2+)(out) + H(+)(in). It catalyses the reaction Fe(2+)(in) + H(+)(out) = Fe(2+)(out) + H(+)(in). Its function is as follows. Divalent metal cation transporter which exports Zn(2+), Cd(2+) and possibly Fe(2+). May be involved in zinc and iron detoxification by efflux. The chain is Cation-efflux pump FieF from Yersinia pestis bv. Antiqua (strain Antiqua).